Consider the following 334-residue polypeptide: Type IV inositol polyphosphate 5-phosphatase 11 (334 aa).

Catalytic stretches follow at residues 206-222 (DLTV…QDVS) and 282-297 (KIRV…FKIQ).

Belongs to the inositol polyphosphate 5-phosphatase family. As to expression, expressed ubiquitously.

It localises to the cell membrane. The enzyme catalyses a 1,2-diacyl-sn-glycero-3-phospho-(1D-myo-inositol-4,5-bisphosphate) + H2O = a 1,2-diacyl-sn-glycero-3-phospho-(1D-myo-inositol 4-phosphate) + phosphate. The catalysed reaction is a 1,2-diacyl-sn-glycero-3-phospho-(1D-myo-inositol-3,4,5-trisphosphate) + H2O = a 1,2-diacyl-sn-glycero-3-phospho-(1D-myo-inositol-3,4-bisphosphate) + phosphate. Functionally, has phosphatase activity toward PtdIns(4,5)P2, and in vitro toward PtdIns(3,5)P2 and PtdIns(3,4,5)P3. Cannot dephosphorylate PtdIns(5)P, Ins(1,4,5)P3 and Ins(1,3,4,5)P4. The chain is Type IV inositol polyphosphate 5-phosphatase 11 from Arabidopsis thaliana (Mouse-ear cress).